A 485-amino-acid polypeptide reads, in one-letter code: Glutamyl-tRNA(Gln) amidotransferase subunit A (485 aa).

Residues Lys79 and Ser154 each act as charge relay system in the active site. Residue Ser178 is the Acyl-ester intermediate of the active site.

This sequence belongs to the amidase family. GatA subfamily. As to quaternary structure, heterotrimer of A, B and C subunits.

It carries out the reaction L-glutamyl-tRNA(Gln) + L-glutamine + ATP + H2O = L-glutaminyl-tRNA(Gln) + L-glutamate + ADP + phosphate + H(+). Its function is as follows. Allows the formation of correctly charged Gln-tRNA(Gln) through the transamidation of misacylated Glu-tRNA(Gln) in organisms which lack glutaminyl-tRNA synthetase. The reaction takes place in the presence of glutamine and ATP through an activated gamma-phospho-Glu-tRNA(Gln). The polypeptide is Glutamyl-tRNA(Gln) amidotransferase subunit A (Clostridium novyi (strain NT)).